The primary structure comprises 294 residues: Glycine--tRNA ligase alpha subunit (294 aa).

The protein belongs to the class-II aminoacyl-tRNA synthetase family. As to quaternary structure, tetramer of two alpha and two beta subunits.

It is found in the cytoplasm. The enzyme catalyses tRNA(Gly) + glycine + ATP = glycyl-tRNA(Gly) + AMP + diphosphate. This chain is Glycine--tRNA ligase alpha subunit, found in Trichormus variabilis (strain ATCC 29413 / PCC 7937) (Anabaena variabilis).